The primary structure comprises 456 residues: Kynurenine 3-monooxygenase (456 aa).

This sequence belongs to the aromatic-ring hydroxylase family. KMO subfamily. FAD serves as cofactor.

It catalyses the reaction L-kynurenine + NADPH + O2 + H(+) = 3-hydroxy-L-kynurenine + NADP(+) + H2O. It functions in the pathway cofactor biosynthesis; NAD(+) biosynthesis; quinolinate from L-kynurenine: step 1/3. Its function is as follows. Catalyzes the hydroxylation of L-kynurenine (L-Kyn) to form 3-hydroxy-L-kynurenine (L-3OHKyn). Required for synthesis of quinolinic acid. This chain is Kynurenine 3-monooxygenase, found in Xanthomonas campestris pv. campestris (strain B100).